The primary structure comprises 76 residues: Large ribosomal subunit protein uL29 (76 aa).

The protein belongs to the universal ribosomal protein uL29 family.

This is Large ribosomal subunit protein uL29 from Corynebacterium diphtheriae (strain ATCC 700971 / NCTC 13129 / Biotype gravis).